The following is a 53-amino-acid chain: Dihydrolipoyl dehydrogenase (53 aa).

Residues 35–44 (EKYPTFGGTC) and Lys53 each bind FAD. Cys44 and Cys49 form a disulfide bridge.

Belongs to the class-I pyridine nucleotide-disulfide oxidoreductase family. Homodimer. The cofactor is FAD.

The protein resides in the mitochondrion. It carries out the reaction N(6)-[(R)-dihydrolipoyl]-L-lysyl-[protein] + NAD(+) = N(6)-[(R)-lipoyl]-L-lysyl-[protein] + NADH + H(+). Lipoamide reduction and the NADH -&gt; NAD reaction are both completely inhibited by copper and cadmium ions. Lipoamide dehydrogenase is a component of the glycine cleavage system as well as of the alpha-ketoacid dehydrogenase complexes. This enzyme has lipoamide dehydrogenase activity and NADH -&gt; NAD transhydrogenation activity. Also displays some NADH-ferricyanide reductase and NADPH -&gt; NAD transydrogenation activities. This chain is Dihydrolipoyl dehydrogenase, found in Hymenolepis diminuta (Rat tapeworm).